We begin with the raw amino-acid sequence, 202 residues long: Peptide deformylase 2 (202 aa).

Positions 120 and 162 each coordinate Fe cation. The active site involves glutamate 163. Histidine 166 contributes to the Fe cation binding site.

This sequence belongs to the polypeptide deformylase family. The cofactor is Fe(2+).

The enzyme catalyses N-terminal N-formyl-L-methionyl-[peptide] + H2O = N-terminal L-methionyl-[peptide] + formate. Functionally, removes the formyl group from the N-terminal Met of newly synthesized proteins. Requires at least a dipeptide for an efficient rate of reaction. N-terminal L-methionine is a prerequisite for activity but the enzyme has broad specificity at other positions. The protein is Peptide deformylase 2 of Rickettsia conorii (strain ATCC VR-613 / Malish 7).